The primary structure comprises 262 residues: UPF0739 protein C1orf74 homolog (262 aa).

This sequence belongs to the UPF0739 family.

This Xenopus laevis (African clawed frog) protein is UPF0739 protein C1orf74 homolog.